The chain runs to 379 residues: GDP-mannose transporter 1 (379 aa).

At 1 to 39 the chain is on the cytoplasmic side; sequence MTDNRKPEDYTIEMDKLGQNKNYQAPPPPPQPRSSTASS. Residues 17 to 38 are disordered; sequence LGQNKNYQAPPPPPQPRSSTAS. The chain crosses the membrane as a helical span at residues 40-60; that stretch reads ISNNAALSVLAYCGSSILMTV. Residues 61-69 lie on the Lumenal side of the membrane; it reads MNKYVLSSD. A helical transmembrane segment spans residues 70–90; the sequence is FNLNFFLLCVQSLVCIIAIQL. Residues 91-110 are Cytoplasmic-facing; the sequence is CKACGLITYRDFNLDEARKW. A helical membrane pass occupies residues 111 to 133; that stretch reads FPITLLLIGMIYTGSKALQFLSI. Residues 134 to 136 are Lumenal-facing; that stretch reads PVY. The helical transmembrane segment at 137–156 threads the bilayer; that stretch reads TIFKNLTIILIAYGEVLWFG. At 157–162 the chain is on the cytoplasmic side; sequence GSVTNL. The chain crosses the membrane as a helical span at residues 163 to 182; that stretch reads TLFSFGLMVFSSIIAAWADI. Residues 183–198 are Lumenal-facing; the sequence is KHAIESSGDATSKVST. The chain crosses the membrane as a helical span at residues 199-219; the sequence is LNAGYIWMLINCLCTSSYVLG. Topologically, residues 220–233 are cytoplasmic; the sequence is MRKRIKLTNFKDFD. A helical membrane pass occupies residues 234 to 254; it reads TMFYNNLLSIPVLIVCSGILE. Over 255–272 the chain is Lumenal; it reads DWSPANVARNFPSADRNG. Residues 273–293 traverse the membrane as a helical segment; sequence IMFAMILSGLSTVFISYTSAW. Over 294–301 the chain is Cytoplasmic; that stretch reads CVRVTSST. Residues 302-322 traverse the membrane as a helical segment; sequence TYSMVGALNKLPIALSGLIFF. Over 323-325 the chain is Lumenal; the sequence is DAP. Residues 326 to 346 form a helical membrane-spanning segment; it reads VTFPSVSAIMVGFVSGIVYAV. Residues 347–379 lie on the Cytoplasmic side of the membrane; that stretch reads AKIKQNAKPKVGILPTTNPVSASSQSMRDSLRS.

This sequence belongs to the TPT transporter family. SLC35D subfamily. In terms of assembly, homooligomer.

It localises to the golgi apparatus membrane. The protein resides in the cytoplasmic vesicle membrane. It is found in the endoplasmic reticulum membrane. Its function is as follows. Involved in the import of GDP-mannose from the cytoplasm into the Golgi lumen. This chain is GDP-mannose transporter 1 (gmt1), found in Emericella nidulans (strain FGSC A4 / ATCC 38163 / CBS 112.46 / NRRL 194 / M139) (Aspergillus nidulans).